Here is a 141-residue protein sequence, read N- to C-terminus: Large ribosomal subunit protein uL11 (141 aa).

The protein belongs to the universal ribosomal protein uL11 family. In terms of assembly, part of the ribosomal stalk of the 50S ribosomal subunit. Interacts with L10 and the large rRNA to form the base of the stalk. L10 forms an elongated spine to which L12 dimers bind in a sequential fashion forming a multimeric L10(L12)X complex. In terms of processing, one or more lysine residues are methylated.

Its function is as follows. Forms part of the ribosomal stalk which helps the ribosome interact with GTP-bound translation factors. This chain is Large ribosomal subunit protein uL11, found in Streptococcus equi subsp. equi (strain 4047).